The following is a 170-amino-acid chain: NADH-quinone oxidoreductase subunit B (170 aa).

[4Fe-4S] cluster-binding residues include Cys-42, Cys-43, Cys-107, and Cys-136.

It belongs to the complex I 20 kDa subunit family. NDH-1 is composed of 14 different subunits. Subunits NuoB, C, D, E, F, and G constitute the peripheral sector of the complex. [4Fe-4S] cluster is required as a cofactor.

It localises to the cell inner membrane. It catalyses the reaction a quinone + NADH + 5 H(+)(in) = a quinol + NAD(+) + 4 H(+)(out). NDH-1 shuttles electrons from NADH, via FMN and iron-sulfur (Fe-S) centers, to quinones in the respiratory chain. The immediate electron acceptor for the enzyme in this species is believed to be ubiquinone. Couples the redox reaction to proton translocation (for every two electrons transferred, four hydrogen ions are translocated across the cytoplasmic membrane), and thus conserves the redox energy in a proton gradient. The sequence is that of NADH-quinone oxidoreductase subunit B from Campylobacter curvus (strain 525.92).